A 494-amino-acid chain; its full sequence is MEQKEGKLSEDGTTVSPAADNPEMSGGGAPAEETKGTAGKAINEGPPTESGKQEKAPAEDGMSAELQGEANGLDEVKVESQREAGGKEDAEAELKKEDGEKEETTVGSQEMTGRKEETKSEPKEAEEKESTLASEKQKAEEKEAKPESGQKADANDRDKPEPKATVEEEDAKTASQEETGQRKECSTEPKEKATDEEAKAESQKAVVEDEAKAEPKEPDGKEEAKHGAKEEADAKEEAEDAEEAEPGSPSEEQEQDVEKEPEGGAGVIPSSPEEWPESPTGEGHNLSTDGLGPDCVASGQTSPSASESSPSDVPQSPPESPSSGEKKEKAPERRVSAPARPRGPRAQNRKAIVDKFGGAASGPTALFRNTKAAGAAIGGVKNMLLEWCRAMTKKYEHVDIQNFSSSWSSGMAFCALIHKFFPDAFDYAELDPAKRRHNFTLAFSTAEKLADCAQLLDVDDMVRLAVPDSKCVYTYIQELYRSLVQKGLVKTKKK.

Composition is skewed to basic and acidic residues over residues 1–10 (MEQKEGKLSE), 74–104 (DEVK…KEET), 112–166 (TGRK…KATV), and 179–232 (TGQR…KEEA). The interval 1–348 (MEQKEGKLSE…ARPRGPRAQN (348 aa)) is disordered. A coiled-coil region spans residues 123 to 145 (KEAEEKESTLASEKQKAEEKEAK). Residues 233–255 (DAKEEAEDAEEAEPGSPSEEQEQ) show a composition bias toward acidic residues. 2 stretches are compositionally biased toward low complexity: residues 269–279 (PSSPEEWPESP) and 302–314 (SPSA…SDVP). Basic and acidic residues predominate over residues 324-335 (GEKKEKAPERRV). At Ser336 the chain carries Phosphoserine. Positions 378–484 (GGVKNMLLEW…YIQELYRSLV (107 aa)) constitute a Calponin-homology (CH) domain. A calmodulin-binding region spans residues 476–494 (IQELYRSLVQKGLVKTKKK).

This sequence belongs to the smoothelin family. Interacts with PPP1R12A. In terms of processing, maximal phosphorylation of Ser-336 correlates with maximal relaxation of aorta in response to acetylcholine. Expressed in striated muscles, specifically in type 2a fibers (at protein level).

The protein localises to the cytoplasm. Its subcellular location is the myofibril. It is found in the sarcomere. It localises to the i band. The protein resides in the m line. The protein localises to the nucleus. In terms of biological role, plays a role in the regulation of contractile properties of both striated and smooth muscles. When unphosphorylated, may inhibit myosin dephosphorylation. Phosphorylation at Ser-299 reduces this inhibitory activity. The protein is Smoothelin-like protein 1 (SMTNL1) of Homo sapiens (Human).